The sequence spans 182 residues: UPF0149 protein CGSHiGG_07585 (182 aa).

Belongs to the UPF0149 family.

This Haemophilus influenzae (strain PittGG) protein is UPF0149 protein CGSHiGG_07585.